We begin with the raw amino-acid sequence, 130 residues long: Small ribosomal subunit protein uS9 (130 aa).

The protein belongs to the universal ribosomal protein uS9 family.

The sequence is that of Small ribosomal subunit protein uS9 from Streptococcus pyogenes serotype M1.